The chain runs to 104 residues: MNVFEKIIQGEIPCSKILENERFLSFYDINPKAKVHALVIPKQSIQDFNGITPELMAQMTSFIFEVVEKLGIKEKGYKLLTNVGKNAGQEVMHLHFHILSGDKH.

Residues 3-104 (VFEKIIQGEI…HFHILSGDKH (102 aa)) form the HIT domain. Residues 93–97 (HLHFH) carry the Histidine triad motif motif.

This is an uncharacterized protein from Helicobacter pylori (strain J99 / ATCC 700824) (Campylobacter pylori J99).